Reading from the N-terminus, the 445-residue chain is Homogentisate 1,2-dioxygenase (445 aa).

Lys98 is modified (N6-acetyllysine). Fe cation is bound by residues His335, Glu341, and His371. The residue at position 414 (Lys414) is an N6-succinyllysine.

This sequence belongs to the homogentisate dioxygenase family. Homohexamer arranged as a dimer of trimers. Fe cation serves as cofactor.

The enzyme catalyses homogentisate + O2 = 4-maleylacetoacetate + H(+). Its pathway is amino-acid degradation; L-phenylalanine degradation; acetoacetate and fumarate from L-phenylalanine: step 4/6. In terms of biological role, catalyzes the conversion of homogentisate to maleylacetoacetate. The chain is Homogentisate 1,2-dioxygenase (Hgd) from Mus musculus (Mouse).